Here is a 213-residue protein sequence, read N- to C-terminus: Protein FAM177A1 (213 aa).

Met-1 carries the post-translational modification N-acetylmethionine. Residue Ser-70 is modified to Phosphoserine. Thr-71 is subject to Phosphothreonine. Residues 136–173 adopt a coiled-coil conformation; that stretch reads IDEYYRMKKEEEEEEEENRMSEEAEKQYQQNKLQTDSI. The interval 147–175 is disordered; the sequence is EEEEEENRMSEEAEKQYQQNKLQTDSIVQ. The segment covering 162-175 has biased composition (polar residues); that stretch reads QYQQNKLQTDSIVQ.

It belongs to the FAM177 family.

This chain is Protein FAM177A1 (FAM177A1), found in Homo sapiens (Human).